The chain runs to 525 residues: Nucleolar complex protein 4 homolog (525 aa).

3 helical membrane passes run 305-325 (AAYD…FVPI), 356-376 (FFHL…LVAA), and 384-404 (LSLT…CNLI).

This sequence belongs to the CBF/MAK21 family.

The protein localises to the nucleus membrane. It is found in the nucleus. It localises to the nucleolus. The polypeptide is Nucleolar complex protein 4 homolog (noc4l) (Danio rerio (Zebrafish)).